A 348-amino-acid chain; its full sequence is MQHIVDVLVIGASQAGLAMGYYLKQNNILFAIVGKENRIGDVWRNRYDSLVLFTPRWFSSLPGMALKGDPNGYPTKDEIADYLEDYAQKFELPIHLNTEVISLQKEDEIFKVTTNNGNYVAEKVVVATGPFQKPYIPPFAESLSDKVYQVHTSRYLNPSQLQEGSVLVVGAGNSGAQIAVELSEDREVYLSVGHKMKFFPLEIMGKSIFWWFKKLGLLNVHINSSLGQFISKQSDPIFGKELKHLIQEGKIKIKPRTESILGDVISFADNSQIQVQNVIWATGFYSDYSWIQIPNVLDHRGKPIHQRGVTSVKGLYFLGLPWQYRRGSALIGGVGADAEYLINDILNH.

This is an uncharacterized protein from Geobacillus kaustophilus (strain HTA426).